A 419-amino-acid chain; its full sequence is Elongation factor Tu, chloroplastic (419 aa).

A tr-type G domain is found at 10–214 (KPHVNIGTIG…KVDEYIPTPD (205 aa)). Positions 19 to 26 (GHVDHGKT) are G1. 19-26 (GHVDHGKT) provides a ligand contact to GTP. Threonine 26 is a binding site for Mg(2+). The interval 60 to 64 (GITIN) is G2. The segment at 81 to 84 (DCPG) is G3. GTP contacts are provided by residues 81-85 (DCPGH) and 136-139 (NKED). The interval 136 to 139 (NKED) is G4. The tract at residues 174–176 (SAL) is G5.

The protein belongs to the TRAFAC class translation factor GTPase superfamily. Classic translation factor GTPase family. EF-Tu/EF-1A subfamily.

It is found in the plastid. It localises to the chloroplast. The enzyme catalyses GTP + H2O = GDP + phosphate + H(+). GTP hydrolase that promotes the GTP-dependent binding of aminoacyl-tRNA to the A-site of ribosomes during protein biosynthesis. In Tetradesmus obliquus (Green alga), this protein is Elongation factor Tu, chloroplastic (tufA).